The sequence spans 566 residues: Putative sulfite reductase [NADPH] hemoprotein beta-component (566 aa).

[4Fe-4S] cluster contacts are provided by C430, C436, C475, and C479. Residue C479 coordinates siroheme.

The protein belongs to the nitrite and sulfite reductase 4Fe-4S domain family. In terms of assembly, alpha(8)-beta(8). The alpha component is a flavoprotein, the beta component is a hemoprotein. The cofactor is siroheme. It depends on [4Fe-4S] cluster as a cofactor.

It catalyses the reaction hydrogen sulfide + 3 NADP(+) + 3 H2O = sulfite + 3 NADPH + 4 H(+). It participates in sulfur metabolism; hydrogen sulfide biosynthesis; hydrogen sulfide from sulfite (NADPH route): step 1/1. Its function is as follows. Component of the sulfite reductase complex that catalyzes the 6-electron reduction of sulfite to sulfide. This is one of several activities required for the biosynthesis of L-cysteine from sulfate. This Buchnera aphidicola subsp. Schizaphis graminum (strain Sg) protein is Putative sulfite reductase [NADPH] hemoprotein beta-component.